The primary structure comprises 78 residues: Defensin-like protein 171 (78 aa).

Positions Met1–Gln23 are cleaved as a signal peptide. 4 disulfide bridges follow: Cys27/Cys71, Cys34/Cys56, Cys40/Cys65, and Cys44/Cys67.

The protein belongs to the DEFL family.

It is found in the secreted. This Arabidopsis thaliana (Mouse-ear cress) protein is Defensin-like protein 171 (LCR61).